Consider the following 273-residue polypeptide: Bis(5'-nucleosyl)-tetraphosphatase, symmetrical (273 aa).

Belongs to the Ap4A hydrolase family.

The enzyme catalyses P(1),P(4)-bis(5'-adenosyl) tetraphosphate + H2O = 2 ADP + 2 H(+). In terms of biological role, hydrolyzes diadenosine 5',5'''-P1,P4-tetraphosphate to yield ADP. This chain is Bis(5'-nucleosyl)-tetraphosphatase, symmetrical, found in Proteus mirabilis (strain HI4320).